The primary structure comprises 697 residues: Sialic acid-binding Ig-like lectin 10 (697 aa).

Residues 1-16 (MLLPLLLSSLLGGSQA) form the signal peptide. The Extracellular portion of the chain corresponds to 17–550 (MDGRFWIRVQ…KGLISTAFSN (534 aa)). The region spanning 18 to 121 (DGRFWIRVQE…DESQYFFRVE (104 aa)) is the Ig-like V-type domain. Disulfide bonds link Cys36-Cys173, Cys41-Cys101, Cys164-Cys215, and Cys276-Cys323. Asn100 carries N-linked (GlcNAc...) asparagine glycosylation. Arg119 contributes to the N-acetylneuraminate binding site. Ig-like C2-type domains are found at residues 146–231 (PDVY…RTVR), 251–339 (PALE…LDLS), and 344–441 (PENL…LSLS). N-linked (GlcNAc...) asparagine glycosylation is found at Asn355 and Asn364. Cys380 and Cys425 are oxidised to a cystine. N-linked (GlcNAc...) asparagine glycans are attached at residues Asn486 and Asn504. The chain crosses the membrane as a helical span at residues 551–571 (GAFLGIGITALLFLCLALIIM). Residues 572–697 (KILPKRRTQT…QADYAEVKFQ (126 aa)) lie on the Cytoplasmic side of the membrane. The ITIM motif 1 motif lies at 595 to 600 (LDYINV). The segment at 606–697 (PLAQKRNQKA…QADYAEVKFQ (92 aa)) is disordered. Residues 620-629 (PRTPLPPGAP) show a composition bias toward pro residues. Residues 650-659 (KSSTQAPESQ) show a composition bias toward polar residues. The short motif at 665–670 (LHYATL) is the ITIM motif 2 element. Residue Tyr667 is modified to Phosphotyrosine.

The protein belongs to the immunoglobulin superfamily. SIGLEC (sialic acid binding Ig-like lectin) family. As to quaternary structure, interacts with PTPN6/SHP-1 upon phosphorylation. Interacts with NCF1. Interacts with CD24; the probable CD24:SIGLEC10 complex is proposed to inhibit HGMB1-mediated tissue damage immune response. Interacts with HMGB1; the interaction is dependent on CD24. Interacts with RIGI, CBL and PTPN11. Phosphorylation of Tyr-667 is involved in binding to PTPN6. Expressed by peripheral blood leukocytes (eosinophils, monocytes and a natural killer cell subpopulation). Isoform 5 is found to be the most abundant isoform. Found in lymph node, lung, ovary and appendix. Isoform 1 is found at high levels and isoform 2 at lower levels in bone marrow, spleen and spinal cord. Isoform 2 is also found in brain. Isoform 4 is specifically found in natural killer cells.

The protein resides in the cell membrane. It localises to the secreted. Functionally, putative adhesion molecule that mediates sialic-acid dependent binding to cells. Preferentially binds to alpha-2,3- or alpha-2,6-linked sialic acid. The sialic acid recognition site may be masked by cis interactions with sialic acids on the same cell surface. In the immune response, seems to act as an inhibitory receptor upon ligand induced tyrosine phosphorylation by recruiting cytoplasmic phosphatase(s) via their SH2 domain(s) that block signal transduction through dephosphorylation of signaling molecules. Involved in negative regulation of B-cell antigen receptor signaling. The inhibition of B cell activation is dependent on PTPN6/SHP-1. In association with CD24 may be involved in the selective suppression of the immune response to danger-associated molecular patterns (DAMPs) such as HMGB1, HSP70 and HSP90. In association with CD24 may regulate the immune repsonse of natural killer (NK) cells. Plays a role in the control of autoimmunity. During initiation of adaptive immune responses by CD8-alpha(+) dendritic cells inhibits cross-presentation by impairing the formation of MHC class I-peptide complexes. The function seems to implicate recruitment of PTPN6/SHP-1, which dephosphorylates NCF1 of the NADPH oxidase complex consequently promoting phagosomal acidification. The sequence is that of Sialic acid-binding Ig-like lectin 10 (SIGLEC10) from Homo sapiens (Human).